Consider the following 306-residue polypeptide: Porphobilinogen deaminase (306 aa).

Cys240 is modified (S-(dipyrrolylmethanemethyl)cysteine).

The protein belongs to the HMBS family. Monomer. Dipyrromethane is required as a cofactor.

The enzyme catalyses 4 porphobilinogen + H2O = hydroxymethylbilane + 4 NH4(+). It functions in the pathway porphyrin-containing compound metabolism; protoporphyrin-IX biosynthesis; coproporphyrinogen-III from 5-aminolevulinate: step 2/4. In terms of biological role, tetrapolymerization of the monopyrrole PBG into the hydroxymethylbilane pre-uroporphyrinogen in several discrete steps. This Syntrophomonas wolfei subsp. wolfei (strain DSM 2245B / Goettingen) protein is Porphobilinogen deaminase.